Reading from the N-terminus, the 471-residue chain is MKSAVETLSPTRAKLTVEVPFEELKPSLDAAYKQIAKQINVPGFRRGKVPPAIIDRQVGRGAVLDQAINDVVPQKYVEALQANSLQPLAQPEIEVTKFEDNQALEFTAEVDIRPEIALPDYDGVEAQVDDIELSDADVEEQVEALRERFATLIDVERPAAEGDFVVMDLVATRDGEPIEGAEVSGMSYRVGRGGMLDGLDEALVGMSAGDEKTFQSELVGGDMVGEAVDVAVTVSQVQEQELPELDDEFAQMASEFDTVEELTADVRERLGRGRRLEQAAAARDAVLEQLLDRVEVPLPEVVVTDELNARRQNVEQQLAYAGITMEKYLEDEGQTMEEFEADLERRVRDAVAAQFLLDEVAKKEEFGIDQAELSEHLVRRAQQSGQDPQEFANHMFEHNHIPELVQEILRGKALARIVEAAVVKDGSGNVVELKNLRPDGTIGEPEDEIEAETEIEIEPAAETDTEADTEQ.

The region spanning 162–243 (GDFVVMDLVA…VSQVQEQELP (82 aa)) is the PPIase FKBP-type domain. The disordered stretch occupies residues 436–471 (LRPDGTIGEPEDEIEAETEIEIEPAAETDTEADTEQ). Residues 444–471 (EPEDEIEAETEIEIEPAAETDTEADTEQ) show a composition bias toward acidic residues.

This sequence belongs to the FKBP-type PPIase family. Tig subfamily.

The protein resides in the cytoplasm. It catalyses the reaction [protein]-peptidylproline (omega=180) = [protein]-peptidylproline (omega=0). In terms of biological role, involved in protein export. Acts as a chaperone by maintaining the newly synthesized protein in an open conformation. Functions as a peptidyl-prolyl cis-trans isomerase. The protein is Trigger factor of Nocardioides sp. (strain ATCC BAA-499 / JS614).